Reading from the N-terminus, the 235-residue chain is Small ribosomal subunit protein uS3 (235 aa).

Positions 39–107 constitute a KH type-2 domain; that stretch reads IRTYIENELK…ETHLNIVEVR (69 aa). The segment at 215-235 is disordered; it reads SERRAVEGAGDGGGQRRRENA.

It belongs to the universal ribosomal protein uS3 family. As to quaternary structure, part of the 30S ribosomal subunit. Forms a tight complex with proteins S10 and S14.

Binds the lower part of the 30S subunit head. Binds mRNA in the 70S ribosome, positioning it for translation. In Chelativorans sp. (strain BNC1), this protein is Small ribosomal subunit protein uS3.